Consider the following 134-residue polypeptide: Bradykinin-related peptides (134 aa).

An N-terminal signal peptide occupies residues 1 to 22; that stretch reads MAFLKKSLFLVLFLGVVSLSFC. Propeptides lie at residues 23–44, 71–82, and 99–121; these read EEEK…ESLG, RSISGLTPIRLS, and ISEA…PLRG. Residues 24-33 are compositionally biased toward basic and acidic residues; that stretch reads EEKREEHEEE. Positions 24–71 are disordered; it reads EEKREEHEEEKRDEEDAESLGKRYGGLSPLRISKRVPPGFTPFRSPAR. Proline 126 carries the post-translational modification 4-hydroxyproline; partial; in form [Hyp3]-bradykinin and [Hyp3]-bradykinin-Val,Asp.

Belongs to the frog skin active peptide (FSAP) family. Bradykinin-related peptide subfamily. As to expression, expressed by the skin glands. Expression levels in inguinal glands are much higher than in granular glands.

It is found in the secreted. May produce in vitro relaxation of rat arterial smooth muscle and constriction of intestinal smooth muscle. May target bradykinin receptors (BDKRB). The sequence is that of Bradykinin-related peptides from Physalaemus nattereri (Cuyaba dwarf frog).